Here is a 378-residue protein sequence, read N- to C-terminus: Zinc transporter 7 (378 aa).

Topologically, residues 1 to 37 are cytoplasmic; sequence MLPLSIKDDEYKPPKFNLFGKISGWFRSILSDKTSRN. A helical membrane pass occupies residues 38-58; the sequence is LFFFLCLNLSFAFVELLYGIW. Over 59-67 the chain is Lumenal; it reads SNCLGLISD. Residues 68-88 form a helical membrane-spanning segment; the sequence is SFHMFFDSTAILAGLAASVIS. Over 89 to 102 the chain is Cytoplasmic; the sequence is KWRDNDAFSYGYVR. The chain crosses the membrane as a helical span at residues 103 to 123; that stretch reads AEVLAGFVNGLFLIFTAFFIF. Residues 124–140 are Lumenal-facing; it reads SEGVERALAPPDVHHER. Residues 141-161 traverse the membrane as a helical segment; sequence LLLVSILGFVVNLVGIFVFNH. The interval 161–220 is his-rich loop; the sequence is HGGHGHSHGSGHGHSHSLFNGALDHSHGHEDHCHSHEAKHGAAHSHDHDHAHGHGHLHSH. The Cytoplasmic segment spans residues 162–238; the sequence is GGHGHSHGSG…AGPSRQILQG (77 aa). Residues 186–223 are compositionally biased toward basic and acidic residues; that stretch reads SHGHEDHCHSHEAKHGAAHSHDHDHAHGHGHLHSHDGP. The tract at residues 186-224 is disordered; sequence SHGHEDHCHSHEAKHGAAHSHDHDHAHGHGHLHSHDGPS. The chain crosses the membrane as a helical span at residues 239 to 259; it reads VFLHILADTLGSIGVIASAIM. Topologically, residues 260 to 264 are lumenal; that stretch reads MQNFG. A helical transmembrane segment spans residues 265 to 285; the sequence is LMIADPICSILIAILIVVSVI. Topologically, residues 286–378 are cytoplasmic; sequence PLLRESVGIL…LYVQIDFAAM (93 aa).

Belongs to the cation diffusion facilitator (CDF) transporter (TC 2.A.4) family. SLC30A subfamily. As to quaternary structure, homooligomer. In terms of tissue distribution, highly expressed in liver, spleen, duodenum and part of the jejunum of small intestine (at protein level). Moderately expressed in kidney, lung, and brain. Barely detectable in heart. In brain, expressed in cerebellum, cerebral cortex and hippocampus (at protein level).

The protein resides in the golgi apparatus membrane. It is found in the cytoplasmic vesicle. The protein localises to the golgi apparatus. It localises to the trans-Golgi network. Its subcellular location is the sarcoplasmic reticulum. The protein resides in the mitochondrion. It carries out the reaction Zn(2+)(in) = Zn(2+)(out). Zinc ion transporter mediating zinc entry from the cytosol into the lumen of organelles along the secretory pathway. By contributing to zinc ion homeostasis within the early secretory pathway, regulates the activation and folding of enzymes like alkaline phosphatases. The protein is Zinc transporter 7 of Mus musculus (Mouse).